The following is a 130-amino-acid chain: uncharacterized protein (130 aa).

Residues 76–102 (RKCKNGPSPNKRGSASGCSRRGGGRGS) are disordered.

This is an uncharacterized protein from Saccharomyces cerevisiae (strain ATCC 204508 / S288c) (Baker's yeast).